Reading from the N-terminus, the 295-residue chain is Bifunctional protein FolD (295 aa).

Residues 166 to 168 (GRS), Ser-195, and Ile-236 contribute to the NADP(+) site.

Belongs to the tetrahydrofolate dehydrogenase/cyclohydrolase family. As to quaternary structure, homodimer.

The catalysed reaction is (6R)-5,10-methylene-5,6,7,8-tetrahydrofolate + NADP(+) = (6R)-5,10-methenyltetrahydrofolate + NADPH. It carries out the reaction (6R)-5,10-methenyltetrahydrofolate + H2O = (6R)-10-formyltetrahydrofolate + H(+). It functions in the pathway one-carbon metabolism; tetrahydrofolate interconversion. Functionally, catalyzes the oxidation of 5,10-methylenetetrahydrofolate to 5,10-methenyltetrahydrofolate and then the hydrolysis of 5,10-methenyltetrahydrofolate to 10-formyltetrahydrofolate. In Prosthecochloris aestuarii (strain DSM 271 / SK 413), this protein is Bifunctional protein FolD.